A 56-amino-acid polypeptide reads, in one-letter code: UPF0339 protein NMA1193/NMA1859 (56 aa).

The protein belongs to the UPF0339 family.

This Neisseria meningitidis serogroup A / serotype 4A (strain DSM 15465 / Z2491) protein is UPF0339 protein NMA1193/NMA1859.